We begin with the raw amino-acid sequence, 49 residues long: Large ribosomal subunit protein eL40 (49 aa).

This sequence belongs to the eukaryotic ribosomal protein eL40 family.

In Natronomonas pharaonis (strain ATCC 35678 / DSM 2160 / CIP 103997 / JCM 8858 / NBRC 14720 / NCIMB 2260 / Gabara) (Halobacterium pharaonis), this protein is Large ribosomal subunit protein eL40.